The sequence spans 188 residues: Elongation factor P (188 aa).

The protein belongs to the elongation factor P family.

The protein localises to the cytoplasm. It functions in the pathway protein biosynthesis; polypeptide chain elongation. In terms of biological role, involved in peptide bond synthesis. Stimulates efficient translation and peptide-bond synthesis on native or reconstituted 70S ribosomes in vitro. Probably functions indirectly by altering the affinity of the ribosome for aminoacyl-tRNA, thus increasing their reactivity as acceptors for peptidyl transferase. The protein is Elongation factor P of Streptomyces avermitilis (strain ATCC 31267 / DSM 46492 / JCM 5070 / NBRC 14893 / NCIMB 12804 / NRRL 8165 / MA-4680).